The following is a 291-amino-acid chain: Pituitary-specific positive transcription factor 1 (291 aa).

The 9aaTAD motif lies at 5–13 (AFTSADTFI). A POU-specific domain is found at 124–198 (MDSPEIRELE…ILSKWLEEAE (75 aa)). A DNA-binding region (homeobox) is located at residues 214 to 273 (KRKRRTTISIAAKDALERHFGEQNKPSSQEIMRMAEELNLEKEVVRVWFCNRRQREKRVK).

The protein belongs to the POU transcription factor family. Class-1 subfamily. In terms of assembly, interacts with PITX1. Interacts with LHX3. Interacts with ELK1.

It is found in the nucleus. Transcription factor involved in the specification of the lactotrope, somatotrope, and thyrotrope phenotypes in the developing anterior pituitary. Specifically binds to the consensus sequence 5'-TAAAT-3'. Activates growth hormone and prolactin genes. The sequence is that of Pituitary-specific positive transcription factor 1 (POU1F1) from Homo sapiens (Human).